The chain runs to 122 residues: Holo-[acyl-carrier-protein] synthase (122 aa).

Mg(2+)-binding residues include aspartate 8 and glutamate 56.

It belongs to the P-Pant transferase superfamily. AcpS family. Mg(2+) is required as a cofactor.

The protein resides in the cytoplasm. It carries out the reaction apo-[ACP] + CoA = holo-[ACP] + adenosine 3',5'-bisphosphate + H(+). In terms of biological role, transfers the 4'-phosphopantetheine moiety from coenzyme A to a Ser of acyl-carrier-protein. This is Holo-[acyl-carrier-protein] synthase from Alkaliphilus oremlandii (strain OhILAs) (Clostridium oremlandii (strain OhILAs)).